Here is a 469-residue protein sequence, read N- to C-terminus: Cysteine--tRNA ligase (469 aa).

Cysteine 33 contacts Zn(2+). The 'HIGH' region motif lies at 35 to 45; it reads PTVYNLLHIGN. 3 residues coordinate Zn(2+): cysteine 214, histidine 239, and glutamate 243. The 'KMSKS' region motif lies at 271 to 275; the sequence is KMSKS. Residue lysine 274 coordinates ATP.

This sequence belongs to the class-I aminoacyl-tRNA synthetase family. Monomer. Requires Zn(2+) as cofactor.

It localises to the cytoplasm. It catalyses the reaction tRNA(Cys) + L-cysteine + ATP = L-cysteinyl-tRNA(Cys) + AMP + diphosphate. This is Cysteine--tRNA ligase from Petrotoga mobilis (strain DSM 10674 / SJ95).